A 1320-amino-acid chain; its full sequence is Tetratricopeptide repeat protein 21A (1320 aa).

19 TPR repeats span residues 4–38, 110–143, 146–180, 181–213, 215–247, 334–367, 502–534, 572–605, 728–761, 762–795, 797–828, 837–869, 889–922, 924–956, 957–990, 1028–1061, 1201–1234, 1236–1268, and 1270–1303; these read NDSS…FSND, GTAL…SRGF, AYVL…TKDV, LGLM…SGSF, PALV…DESN, VHVA…DKDG, IDPL…DPAS, PLYH…PALK, PHTS…NPHD, ASLA…NGQD, LCCD…DIVQ, VKCL…QSRI, ASIC…LPTD, KVML…EQNH, ETAS…APDN, PGFN…STWG, EKSW…NKSC, KAYE…SHHA, and PAIG…HPDY.

Belongs to the TTC21 family. In terms of assembly, interacts with IFT20. Interacts with IFT52. Interacts with IFT140. Interacts with CEP78; regulating IFT20 stability and localization. As to expression, strongly expressed in testis.

Functionally, intraflagellar transport (IFT)-associated protein required for spermatogenesis. Required for sperm flagellar formation and intraflagellar transport. This Homo sapiens (Human) protein is Tetratricopeptide repeat protein 21A.